A 544-amino-acid polypeptide reads, in one-letter code: Inward rectifier potassium channel irk-1 (544 aa).

Topologically, residues 1 to 109 are cytoplasmic; sequence MTLSVPDCAE…IFTTMIDVKW (109 aa). The chain crosses the membrane as a helical span at residues 110-134; it reads RWMLMLFASAFVLSWSIFGTTYYLI. The Extracellular segment spans residues 135 to 158; the sequence is ALVHGDLSLPTPVNHTACVMNLDS. Residues 159–170 constitute an intramembrane region (helical; Pore-forming); the sequence is VYSSFLFAVETH. An intramembrane region (pore-forming) is located at residues 171–177; sequence HTIGYGH. The Selectivity filter signature appears at 172–177; it reads TIGYGH. Residues 178 to 186 lie on the Extracellular side of the membrane; sequence RYITTECYL. Residues 187 to 208 traverse the membrane as a helical segment; that stretch reads AGAIVCLQAICALLLQSFMVGI. Over 209–544 the chain is Cytoplasmic; that stretch reads VFAKMARPKK…PIHIEIVSET (336 aa). Disordered stretches follow at residues 411–448 and 512–533; these read HKLE…NSPV and LSDL…SPPV. Over residues 438–448 the composition is skewed to polar residues; that stretch reads NHFQSSSNSPV.

It belongs to the inward rectifier-type potassium channel (TC 1.A.2.1) family. In terms of tissue distribution, expressed in neurons in the head and tail with no expression detected in non-neuronal cells in these regions. Also detected in the egg-laying system of adult hermaphordites with strong expression in the HSN motor neurons and weak expression in vulval muscles.

Its subcellular location is the membrane. It is found in the perikaryon. The protein localises to the cell projection. Functionally, inward rectifier potassium channels are characterized by a greater tendency to allow potassium to flow into the cell rather than out of it. Required for modulation of the activity of the hermaphrodite-specific neurons (HSNs) by the G-protein coupled neuropeptide receptor egl-6 which in turn controls egg-laying behavior. This chain is Inward rectifier potassium channel irk-1 (irk-1), found in Caenorhabditis elegans.